Reading from the N-terminus, the 203-residue chain is Small ribosomal subunit protein uS4 (203 aa).

The S4 RNA-binding domain occupies 93–156; that stretch reads TRLDNLVFRL…QNLAIVNEAI (64 aa).

Belongs to the universal ribosomal protein uS4 family. In terms of assembly, part of the 30S ribosomal subunit. Contacts protein S5. The interaction surface between S4 and S5 is involved in control of translational fidelity.

One of the primary rRNA binding proteins, it binds directly to 16S rRNA where it nucleates assembly of the body of the 30S subunit. In terms of biological role, with S5 and S12 plays an important role in translational accuracy. The chain is Small ribosomal subunit protein uS4 from Lacticaseibacillus casei (strain BL23) (Lactobacillus casei).